Here is a 210-residue protein sequence, read N- to C-terminus: Large ribosomal subunit protein uL3 (210 aa).

Belongs to the universal ribosomal protein uL3 family. Part of the 50S ribosomal subunit. Forms a cluster with proteins L14 and L19.

Its function is as follows. One of the primary rRNA binding proteins, it binds directly near the 3'-end of the 23S rRNA, where it nucleates assembly of the 50S subunit. The protein is Large ribosomal subunit protein uL3 of Pediococcus pentosaceus (strain ATCC 25745 / CCUG 21536 / LMG 10740 / 183-1w).